Consider the following 249-residue polypeptide: tRNA(Phe) (4-demethylwyosine(37)-C(7)) aminocarboxypropyltransferase (249 aa).

Residues serine 80, arginine 87, glutamate 127, and 154–155 (DN) contribute to the S-adenosyl-L-methionine site.

This sequence belongs to the class I-like SAM-binding methyltransferase superfamily. TRM5/TYW2 family.

Its subcellular location is the cytoplasm. The enzyme catalyses 4-demethylwyosine(37) in tRNA(Phe) + S-adenosyl-L-methionine = 4-demethyl-7-[(3S)-3-amino-3-carboxypropyl]wyosine(37) in tRNA(Phe) + S-methyl-5'-thioadenosine + H(+). S-adenosyl-L-methionine-dependent transferase that acts as a component of the wyosine derivatives biosynthesis pathway. Catalyzes the transfer of the alpha-amino-alpha-carboxypropyl (acp) group from S-adenosyl-L-methionine to 4-demethylwyosine (imG-14), forming 7-aminocarboxypropyl-demethylwyosine (wybutosine-86) at position 37 of tRNA(Phe). The sequence is that of tRNA(Phe) (4-demethylwyosine(37)-C(7)) aminocarboxypropyltransferase from Methanocaldococcus jannaschii (strain ATCC 43067 / DSM 2661 / JAL-1 / JCM 10045 / NBRC 100440) (Methanococcus jannaschii).